Reading from the N-terminus, the 143-residue chain is Photosystem I reaction center subunit IV A, chloroplastic (143 aa).

The N-terminal 44 residues, 1–44 (MAMTTASTVFVLPANVTSVAGASSSRSSVSFLPMRNAGSRLVVR), are a transit peptide targeting the chloroplast. Positions 43-85 (VRAAEDPAPASSSSKDSPAAAAAPDGATATKPKPPPIGPKRGS) are disordered. Positions 48–73 (DPAPASSSSKDSPAAAAAPDGATATK) are enriched in low complexity.

Belongs to the PsaE family. Post-translationally, 2 isoforms may exist. With or without the N-terminal alanine.

It is found in the plastid. It localises to the chloroplast thylakoid membrane. Stabilizes the interaction between PsaC and the PSI core, assists the docking of the ferredoxin to PSI and interacts with ferredoxin-NADP oxidoreductase. This chain is Photosystem I reaction center subunit IV A, chloroplastic (PSAE1), found in Arabidopsis thaliana (Mouse-ear cress).